We begin with the raw amino-acid sequence, 426 residues long: Glutamate-1-semialdehyde 2,1-aminomutase (426 aa).

Residue K265 is modified to N6-(pyridoxal phosphate)lysine.

Belongs to the class-III pyridoxal-phosphate-dependent aminotransferase family. HemL subfamily. Homodimer. Pyridoxal 5'-phosphate serves as cofactor.

The protein resides in the cytoplasm. The enzyme catalyses (S)-4-amino-5-oxopentanoate = 5-aminolevulinate. It functions in the pathway porphyrin-containing compound metabolism; protoporphyrin-IX biosynthesis; 5-aminolevulinate from L-glutamyl-tRNA(Glu): step 2/2. This chain is Glutamate-1-semialdehyde 2,1-aminomutase, found in Shigella sonnei (strain Ss046).